We begin with the raw amino-acid sequence, 255 residues long: Small ribosomal subunit protein uS2 (255 aa).

The segment at 232–255 (ASGRDLGASEEVPVEPALEEASEA) is disordered.

It belongs to the universal ribosomal protein uS2 family.

In Rhizobium meliloti (strain 1021) (Ensifer meliloti), this protein is Small ribosomal subunit protein uS2.